The following is a 202-amino-acid chain: Transmembrane 4 L6 family member 4 (202 aa).

Over 1–9 the chain is Cytoplasmic; the sequence is MCTGGCARC. A helical membrane pass occupies residues 10–30; that stretch reads LGGTLIPLAVFAVLANILLFF. The Extracellular portion of the chain corresponds to 31-48; the sequence is PGGKVVDDNSHLSDEVWY. A helical transmembrane segment spans residues 49-69; sequence FGGILGSGVLMIFPALVFLGL. At 70–93 the chain is on the cytoplasmic side; it reads QNNDCCGCCGNESCGKRFAMFTST. Residues 94–114 traverse the membrane as a helical segment; sequence LFAVVGFLGAAYSFIVSAVSI. Topologically, residues 115-158 are extracellular; it reads NKGPKCFMTNNTWGYPFHDGDYLNDQALWSKCEEPRDVVPWNLT. N-linked (GlcNAc...) asparagine glycosylation occurs at Asn156. Residues 159-179 traverse the membrane as a helical segment; that stretch reads LFSILLVIGGIQMVLCAIQVI. At 180-202 the chain is on the cytoplasmic side; it reads NGLLGTLCGDCQCCGCCGGDRPV.

This sequence belongs to the L6 tetraspanin family. In terms of tissue distribution, expressed in liver and testis. Up-regulated in regenerating liver after partial hepatectomy.

The protein localises to the membrane. Regulates the adhesive and proliferative status of intestinal epithelial cells. Can mediate density-dependent cell proliferation. The polypeptide is Transmembrane 4 L6 family member 4 (Tm4sf4) (Rattus norvegicus (Rat)).